The primary structure comprises 705 residues: p-hydroxybenzoic acid--AMP ligase FadD22 (705 aa).

A Carrier domain is found at 541-619 (ERQRLVVDAV…GLAQYLEAEL (79 aa)). O-(pantetheine 4'-phosphoryl)serine is present on S579.

It belongs to the ATP-dependent AMP-binding enzyme family.

It catalyses the reaction holo-[4-hydroxyphenylalkanoate synthase] + 4-hydroxybenzoate + ATP = 4-hydroxyphenyl-[4-hydroxyphenylalkanoate synthase] + AMP + diphosphate. The protein operates within lipid metabolism; fatty acid biosynthesis. Its function is as follows. Catalyzes the adenylation of p-hydroxybenzoic acid (pHBA) to form p-hydroxybenzoic acid-AMP (pHBA-AMP), which is converted directly to p-hydroxybenzoyl-S-FadD22 (pHBA-S-FAdD22) thioester intermediate in a CoA-independent manner by attack of the phosphopantetheine thiol of FadD22. Usually, this intermediate primes the biosynthesis of the phenolphthiocerol (PPOL) by presenting the pHBA starter unit for elongation by Pks15/1, but M.tuberculosis lacks Pks15/1 due to a natural frameshift and thus is unable to produce PPOL. In Mycobacterium tuberculosis (strain CDC 1551 / Oshkosh), this protein is p-hydroxybenzoic acid--AMP ligase FadD22 (fadD22).